The chain runs to 92 residues: Large ribosomal subunit protein eL43 (92 aa).

The C4-type zinc finger occupies 39-60 (CSFCGKKAVKRGAAGIWNCSSC).

Belongs to the eukaryotic ribosomal protein eL43 family.

The chain is Large ribosomal subunit protein eL43 (RPL43) from Eremothecium gossypii (strain ATCC 10895 / CBS 109.51 / FGSC 9923 / NRRL Y-1056) (Yeast).